The chain runs to 432 residues: Adenylosuccinate synthetase (432 aa).

GTP-binding positions include 13–19 (GDEGKGK) and 41–43 (GHT). Asp14 acts as the Proton acceptor in catalysis. Mg(2+) is bound by residues Asp14 and Gly41. IMP-binding positions include 14 to 17 (DEGK), 39 to 42 (NAGH), Thr130, Arg144, Gln225, Thr240, and Arg304. The active-site Proton donor is the His42. Substrate is bound at residue 300–306 (ATTGRRR). Residues Arg306, 332–334 (KLD), and 415–417 (STG) each bind GTP.

This sequence belongs to the adenylosuccinate synthetase family. As to quaternary structure, homodimer. The cofactor is Mg(2+).

The protein resides in the cytoplasm. The enzyme catalyses IMP + L-aspartate + GTP = N(6)-(1,2-dicarboxyethyl)-AMP + GDP + phosphate + 2 H(+). It functions in the pathway purine metabolism; AMP biosynthesis via de novo pathway; AMP from IMP: step 1/2. In terms of biological role, plays an important role in the de novo pathway of purine nucleotide biosynthesis. Catalyzes the first committed step in the biosynthesis of AMP from IMP. The protein is Adenylosuccinate synthetase of Salmonella heidelberg (strain SL476).